Reading from the N-terminus, the 339-residue chain is Photosystem II assembly lipoprotein Ycf48 (339 aa).

The signal sequence occupies residues M1–G23. The N-palmitoyl cysteine moiety is linked to residue C24. C24 carries the S-diacylglycerol cysteine lipid modification.

The protein belongs to the Ycf48 family. As to quaternary structure, part of early PSII assembly complexes which includes D1 (psbA) and PsbI; not found in mature PSII. Binds to the lumenal side of PSII complexes. Interacts with YidC.

The protein localises to the cellular thylakoid membrane. In terms of biological role, a factor required for optimal assembly of photosystem II (PSII), acting in the early stages of PSII assembly. Also plays a role in replacement of photodamaged D1 (psbA). Assists YidC in synthesis of chlorophyll-binding proteins. In Prochlorococcus marinus (strain SARG / CCMP1375 / SS120), this protein is Photosystem II assembly lipoprotein Ycf48.